Reading from the N-terminus, the 209-residue chain is 3-hexulose-6-phosphate synthase (209 aa).

Belongs to the HPS/KGPDC family. HPS subfamily. In terms of assembly, homodimer.

It carries out the reaction D-ribulose 5-phosphate + formaldehyde = D-arabino-hex-3-ulose 6-phosphate. It functions in the pathway one-carbon metabolism; formaldehyde assimilation via RuMP pathway; D-fructose 6-phosphate from D-ribulose 5-phosphate and formaldehyde: step 1/2. Functionally, catalyzes the condensation of ribulose 5-phosphate with formaldehyde to form 3-hexulose 6-phosphate. This chain is 3-hexulose-6-phosphate synthase (rmpA), found in Methylomonas aminofaciens.